Here is a 313-residue protein sequence, read N- to C-terminus: Porphobilinogen deaminase (313 aa).

An S-(dipyrrolylmethanemethyl)cysteine modification is found at C242.

The protein belongs to the HMBS family. Monomer. Dipyrromethane serves as cofactor.

The catalysed reaction is 4 porphobilinogen + H2O = hydroxymethylbilane + 4 NH4(+). The protein operates within porphyrin-containing compound metabolism; protoporphyrin-IX biosynthesis; coproporphyrinogen-III from 5-aminolevulinate: step 2/4. In terms of biological role, tetrapolymerization of the monopyrrole PBG into the hydroxymethylbilane pre-uroporphyrinogen in several discrete steps. The chain is Porphobilinogen deaminase from Pseudomonas putida (strain GB-1).